We begin with the raw amino-acid sequence, 139 residues long: Ribosome maturation factor RimP (139 aa).

It belongs to the RimP family.

It localises to the cytoplasm. Its function is as follows. Required for maturation of 30S ribosomal subunits. This chain is Ribosome maturation factor RimP, found in Syntrophomonas wolfei subsp. wolfei (strain DSM 2245B / Goettingen).